A 96-amino-acid polypeptide reads, in one-letter code: Large ribosomal subunit protein bL28 (96 aa).

This sequence belongs to the bacterial ribosomal protein bL28 family.

The polypeptide is Large ribosomal subunit protein bL28 (Methylocella silvestris (strain DSM 15510 / CIP 108128 / LMG 27833 / NCIMB 13906 / BL2)).